Here is a 459-residue protein sequence, read N- to C-terminus: Putrescine aminotransferase (459 aa).

Residues 150 to 151 (GT) and Gln-274 contribute to the pyridoxal 5'-phosphate site. Lys-300 bears the N6-(pyridoxal phosphate)lysine mark. Residue Thr-332 coordinates pyridoxal 5'-phosphate.

This sequence belongs to the class-III pyridoxal-phosphate-dependent aminotransferase family. Putrescine aminotransferase subfamily. Pyridoxal 5'-phosphate is required as a cofactor.

The enzyme catalyses an alkane-alpha,omega-diamine + 2-oxoglutarate = an omega-aminoaldehyde + L-glutamate. It carries out the reaction putrescine + 2-oxoglutarate = 1-pyrroline + L-glutamate + H2O. It catalyses the reaction cadaverine + 2-oxoglutarate = 5-aminopentanal + L-glutamate. It functions in the pathway amine and polyamine degradation; putrescine degradation; 4-aminobutanal from putrescine (transaminase route): step 1/1. In terms of biological role, catalyzes the aminotransferase reaction from putrescine to 2-oxoglutarate, leading to glutamate and 4-aminobutanal, which spontaneously cyclizes to form 1-pyrroline. This is the first step in one of two pathways for putrescine degradation, where putrescine is converted into 4-aminobutanoate (gamma-aminobutyrate or GABA) via 4-aminobutanal. Also functions as a cadaverine transaminase in a a L-lysine degradation pathway to succinate that proceeds via cadaverine, glutarate and L-2-hydroxyglutarate. The polypeptide is Putrescine aminotransferase (Klebsiella pneumoniae (strain 342)).